The following is a 250-amino-acid chain: Probable xyloglucan-specific endo-beta-1,4-glucanase A (250 aa).

An N-terminal signal peptide occupies residues 1–19; the sequence is MKLSVLSLASLASAAALNA. N-linked (GlcNAc...) asparagine glycosylation occurs at Asn-72.

It belongs to the glycosyl hydrolase 12 (cellulase H) family.

Its subcellular location is the secreted. It catalyses the reaction xyloglucan + H2O = xyloglucan oligosaccharides.. Functionally, catalyzes endohydrolysis of 1,4-beta-D-glucosidic linkages in xyloglucan with retention of the beta-configuration of the glycosyl residues. Specific for xyloglucan and does not hydrolyze other cell wall components. In Aspergillus terreus (strain NIH 2624 / FGSC A1156), this protein is Probable xyloglucan-specific endo-beta-1,4-glucanase A (xgeA).